Here is a 561-residue protein sequence, read N- to C-terminus: Lysine--tRNA ligase (561 aa).

Residues Glu-409 and Glu-416 each coordinate Mg(2+).

The protein belongs to the class-II aminoacyl-tRNA synthetase family. In terms of assembly, homodimer. The cofactor is Mg(2+).

The protein resides in the cytoplasm. The catalysed reaction is tRNA(Lys) + L-lysine + ATP = L-lysyl-tRNA(Lys) + AMP + diphosphate. This is Lysine--tRNA ligase from Trichormus variabilis (strain ATCC 29413 / PCC 7937) (Anabaena variabilis).